A 116-amino-acid chain; its full sequence is Nucleoid-associated protein MLBr02330 (116 aa).

The interval 96–116 (LTSAMRPTAPPPTPPTYMAGT) is disordered.

The protein belongs to the YbaB/EbfC family. As to quaternary structure, homodimer.

The protein localises to the cytoplasm. It localises to the nucleoid. Its function is as follows. Binds to DNA and alters its conformation. May be involved in regulation of gene expression, nucleoid organization and DNA protection. The sequence is that of Nucleoid-associated protein MLBr02330 from Mycobacterium leprae (strain Br4923).